Reading from the N-terminus, the 326-residue chain is Elongation factor Ts (326 aa).

Positions 80 to 83 are involved in Mg(2+) ion dislocation from EF-Tu; sequence TDFV.

The protein belongs to the EF-Ts family.

Its subcellular location is the cytoplasm. Its function is as follows. Associates with the EF-Tu.GDP complex and induces the exchange of GDP to GTP. It remains bound to the aminoacyl-tRNA.EF-Tu.GTP complex up to the GTP hydrolysis stage on the ribosome. The chain is Elongation factor Ts from Rhodopirellula baltica (strain DSM 10527 / NCIMB 13988 / SH1).